The following is a 79-amino-acid chain: Gas vesicle protein A2 (79 aa).

The segment at 9–19 (LAEVLDRVLDK) is alpha helix 1. A beta-strand 1 region spans residues 23-31 (VDVWARISL). The segment at 32 to 34 (VGI) is beta turn. Residues 35–43 (EILTVEARV) are beta-strand 2. Positions 48–67 (VDTFLHYAEEIAKIEQAELT) are alpha helix 2.

This sequence belongs to the gas vesicle GvpA family. In terms of assembly, the gas vesicle shell is 2 nm thick and consists of a single layer of this protein. It forms helical ribs nearly perpendicular to the long axis of the vesicle.

The protein localises to the gas vesicle shell. Gas vesicles are hollow, gas filled proteinaceous nanostructures found in several microbial planktonic microorganisms. They allow positioning of halobacteria at the optimal depth for growth in the poorly aerated shallow brine pools of their habitat. GvpA forms the gas vesicle shell. This protein can replace the p-gvpA gene in the p-vac locus and increases the critical collapse pressure (CCP) of hybrid gas vesicles from 0.66 MPa to 0.90 MPa. In stationary phase gas vesicles about 30 times more GvpA1 is found than GvpA2. Its function is as follows. Expression of 2 c-vac DNA fragments containing 2 divergently transcribed regions (gvpE-gvpF-gvpG-gvpH-gvpI-gvpJ-gvpK-gvpL-gvpM and gvpA-gvpC-gvpN-gvpO) allows H.volcanii to produce gas vesicles. All site-directed mutagenesis is tested in H.volcanii. The polypeptide is Gas vesicle protein A2 (Halobacterium salinarum (strain ATCC 700922 / JCM 11081 / NRC-1) (Halobacterium halobium)).